Here is a 133-residue protein sequence, read N- to C-terminus: Holo-[acyl-carrier-protein] synthase (133 aa).

2 residues coordinate Mg(2+): aspartate 8 and glutamate 56.

Belongs to the P-Pant transferase superfamily. AcpS family. The cofactor is Mg(2+).

The protein localises to the cytoplasm. The enzyme catalyses apo-[ACP] + CoA = holo-[ACP] + adenosine 3',5'-bisphosphate + H(+). Functionally, transfers the 4'-phosphopantetheine moiety from coenzyme A to a Ser of acyl-carrier-protein. This Deinococcus radiodurans (strain ATCC 13939 / DSM 20539 / JCM 16871 / CCUG 27074 / LMG 4051 / NBRC 15346 / NCIMB 9279 / VKM B-1422 / R1) protein is Holo-[acyl-carrier-protein] synthase.